Here is a 97-residue protein sequence, read N- to C-terminus: Small ribosomal subunit protein bS20 (97 aa).

This sequence belongs to the bacterial ribosomal protein bS20 family.

Binds directly to 16S ribosomal RNA. This Gloeothece citriformis (strain PCC 7424) (Cyanothece sp. (strain PCC 7424)) protein is Small ribosomal subunit protein bS20.